The chain runs to 528 residues: Linear element-associated protein hop1 (528 aa).

Positions 11 to 212 (TKSDFTLKNL…RGEFKDIVSF (202 aa)) constitute an HORMA domain. Residues 334–385 (LLNCECGDSTEDSEMFQCERCDGWVHCACYGFESDSDPRQPNQLLCYTCLLV) form a PHD-type zinc finger. Zn(2+) contacts are provided by C337, C339, C351, C354, H359, C362, C379, and C382. Residues 507-528 (RPKKVSKTSNTKETDTMKPLRI) form a disordered region. Positions 516 to 528 (NTKETDTMKPLRI) are enriched in basic and acidic residues.

In terms of assembly, interacts (via N-terminus) with rec10; the interaction is direct. Interacts (via C-terminus) with rec15 (via C-terminus); the interaction is direct.

The protein resides in the nucleus. It localises to the chromosome. Functionally, facilitates initiation of meiotic recombination and DNA double-strand break (DSB) formation at DSB hotspot sites by enhancing the interaction between rec10 and rec15. This is Linear element-associated protein hop1 from Schizosaccharomyces pombe (strain 972 / ATCC 24843) (Fission yeast).